A 61-amino-acid polypeptide reads, in one-letter code: Large ribosomal subunit protein bL28 (61 aa).

Belongs to the bacterial ribosomal protein bL28 family.

The sequence is that of Large ribosomal subunit protein bL28 from Lacticaseibacillus paracasei (strain ATCC 334 / BCRC 17002 / CCUG 31169 / CIP 107868 / KCTC 3260 / NRRL B-441) (Lactobacillus paracasei).